A 502-amino-acid chain; its full sequence is Zinc finger C3HC-type protein 1 (502 aa).

Alanine 2 is modified (N-acetylalanine). Serine 24 bears the Phosphoserine mark. Phosphothreonine is present on threonine 28. The segment at 36–73 (IDEGIAPEEGGVDAKDTSATSQSVNGSPQAEQPSLEST) is disordered. Residues 52–72 (TSATSQSVNGSPQAEQPSLES) are compositionally biased toward polar residues. Serine 58 and serine 62 each carry phosphoserine. Threonine 84 bears the Phosphothreonine mark. Residues 102–156 (CAKYGWVTVECDMLKCSSCQAFLCASLQPAFDFDRYKQRCAELKKALCTAHEKFC) form a C3HC-type zinc finger. Positions 170 to 210 (LPLDEPAILVSEFLDRFQSLCHLDLQLPSLRPEDLKTMCLT) are F-box-like. The segment at 302–423 (SSPIPGLEGR…SSRSFFDPTS (122 aa)) is disordered. Residues serine 321 and serine 329 each carry the phosphoserine modification. The span at 327 to 338 (TRSQDATFSPGS) shows a compositional bias: polar residues. The residue at position 333 (threonine 333) is a Phosphothreonine. Phosphoserine occurs at positions 335, 338, 344, 354, 359, and 370. Residues 351-360 (RTRSWDSSSP) show a composition bias toward polar residues. Residues 371–380 (PTTRTRPVTR) are compositionally biased toward low complexity. Serine 381 is subject to Phosphoserine. Threonine 384 and threonine 387 each carry phosphothreonine. Residue serine 395 is modified to Phosphoserine. A Nuclear localization signal motif is present at residues 396-402 (PLRKAKR). Serine 407 and serine 483 each carry phosphoserine. Residues 407–422 (SSSSSDTSSRSFFDPT) show a composition bias toward low complexity.

In terms of assembly, interacts with TPR; this interaction mediates ZC3HC1 nuclear envelopes (NE)-association but also required for proper positioning of a substantial amount of TPR at the nuclear basket (NB). In terms of processing, phosphorylated. May also be weakly phosphorylated on Tyr residues. In terms of tissue distribution, widely expressed. Highly expressed in heart, skeletal muscle and testis. Expressed in brain, placenta, lung, kidney, liver, pancreas, spleen, thymus, prostate, ovary small intestine and colon. Weakly or not expressed in leukocytes.

It is found in the nucleus. It localises to the nucleus envelope. Functionally, required for proper positioning of a substantial amount of TPR at the nuclear basket (NB) through interaction with TPR. The sequence is that of Zinc finger C3HC-type protein 1 from Homo sapiens (Human).